A 367-amino-acid chain; its full sequence is Chorismate synthase (367 aa).

NADP(+) contacts are provided by Arg-48 and Arg-54. Residues 125–127 (RSS), 238–239 (NA), Gly-278, 293–297 (KPTSS), and Arg-319 contribute to the FMN site.

This sequence belongs to the chorismate synthase family. As to quaternary structure, homotetramer. The cofactor is FMNH2.

The enzyme catalyses 5-O-(1-carboxyvinyl)-3-phosphoshikimate = chorismate + phosphate. It participates in metabolic intermediate biosynthesis; chorismate biosynthesis; chorismate from D-erythrose 4-phosphate and phosphoenolpyruvate: step 7/7. In terms of biological role, catalyzes the anti-1,4-elimination of the C-3 phosphate and the C-6 proR hydrogen from 5-enolpyruvylshikimate-3-phosphate (EPSP) to yield chorismate, which is the branch point compound that serves as the starting substrate for the three terminal pathways of aromatic amino acid biosynthesis. This reaction introduces a second double bond into the aromatic ring system. This Xanthomonas campestris pv. campestris (strain 8004) protein is Chorismate synthase.